A 384-amino-acid chain; its full sequence is Omega-6 fatty acid desaturase, endoplasmic reticulum (384 aa).

Positions 1–23 (MGAGGRMQVSPSPKKSETDTLKR) are disordered. Over residues 14–23 (KKSETDTLKR) the composition is skewed to basic and acidic residues. 2 helical membrane passes run 56–76 (LIWDIIVASCFYYVATTYFPL) and 84–104 (VAWPLYWACQGVVLTGVWVIA). A Histidine box-1 motif is present at residues 105–109 (HECGH). The helical transmembrane segment at 117–137 (WLDDTVGLIFHSFLLVPYFSW) threads the bilayer. A Histidine box-2 motif is present at residues 141–145 (HRRHH). The next 3 membrane-spanning stretches (helical) occupy residues 180–200 (VMLTVQFTLGWPLYWAFNVSG), 226–246 (IYVSDAGILAVCYGLYRYAAA), and 253–273 (VCLYGVPLLIVNAFLVLITYL). The Histidine box-3 motif lies at 316–320 (HVAHH).

Belongs to the fatty acid desaturase type 1 family.

The protein localises to the endoplasmic reticulum membrane. It functions in the pathway lipid metabolism; polyunsaturated fatty acid biosynthesis. Functionally, ER (microsomal) omega-6 fatty acid desaturase introduces the second double bond in the biosynthesis of 18:3 fatty acids, important constituents of plant membranes. It is thought to use cytochrome b5 as an electron donor and to act on fatty acids esterified to phosphatidylcholine and, possibly, other phospholipids. In Brassica juncea (Indian mustard), this protein is Omega-6 fatty acid desaturase, endoplasmic reticulum.